A 295-amino-acid polypeptide reads, in one-letter code: Protoheme IX farnesyltransferase (295 aa).

9 consecutive transmembrane segments (helical) span residues 9 to 29 (ITKP…FFLA), 36 to 56 (FGVF…GCVF), 80 to 100 (LVSL…GVAL), 108 to 128 (LAAL…SLYL), 135 to 155 (GTLV…CAVT), 163 to 183 (LTLL…IAIF), 209 to 229 (IMLY…GGYA), 230 to 250 (GLNY…MAWK), and 265 to 285 (FVFS…DFQV).

The protein belongs to the UbiA prenyltransferase family. Protoheme IX farnesyltransferase subfamily.

It localises to the cell inner membrane. It carries out the reaction heme b + (2E,6E)-farnesyl diphosphate + H2O = Fe(II)-heme o + diphosphate. It functions in the pathway porphyrin-containing compound metabolism; heme O biosynthesis; heme O from protoheme: step 1/1. Functionally, converts heme B (protoheme IX) to heme O by substitution of the vinyl group on carbon 2 of heme B porphyrin ring with a hydroxyethyl farnesyl side group. The chain is Protoheme IX farnesyltransferase from Pseudomonas savastanoi pv. phaseolicola (strain 1448A / Race 6) (Pseudomonas syringae pv. phaseolicola (strain 1448A / Race 6)).